The sequence spans 257 residues: Glucosamine-6-phosphate deaminase (257 aa).

Residue Asp-64 is the Proton acceptor; for enolization step of the active site. The For ring-opening step role is filled by Asn-133. His-135 acts as the Proton acceptor; for ring-opening step in catalysis. Glu-140 acts as the For ring-opening step in catalysis.

This sequence belongs to the glucosamine/galactosamine-6-phosphate isomerase family. NagB subfamily.

It catalyses the reaction alpha-D-glucosamine 6-phosphate + H2O = beta-D-fructose 6-phosphate + NH4(+). Its pathway is amino-sugar metabolism; N-acetylneuraminate degradation; D-fructose 6-phosphate from N-acetylneuraminate: step 5/5. Functionally, catalyzes the reversible isomerization-deamination of glucosamine 6-phosphate (GlcN6P) to form fructose 6-phosphate (Fru6P) and ammonium ion. This chain is Glucosamine-6-phosphate deaminase, found in Corynebacterium urealyticum (strain ATCC 43042 / DSM 7109).